A 742-amino-acid polypeptide reads, in one-letter code: Photosystem I P700 chlorophyll a apoprotein A2 (742 aa).

8 helical membrane passes run 46–69, 135–158, 175–199, 273–291, 336–359, 375–401, 423–445, and 525–543; these read LFSTHFGHLAIIALWVAGNLFHIA, LFQASIFMSILACWTLFAGWLHLQ, LNHHLAVLFGFSSIAWTGHLVHVAI, IAHHHIAIGTVFIIAGHMY, LHFQLGLALAALGVATSLVAQHMG, SALYTHHQYIAMFLMVGAFAHGAIFFV, ALISHLSWVTMILGFHTLGIYVH, and FLVHHAIALGLHTTALILI. C567 and C576 together coordinate [4Fe-4S] cluster. Helical transmembrane passes span 583 to 604 and 651 to 673; these read AMYLAMFWALNLIAWVTFYWHW and LSVWAWMFLFGHLVWATGFMFLI. Divinyl chlorophyll a-binding residues include H662, M670, and Y678. W679 is a phylloquinone binding site. The chain crosses the membrane as a helical span at residues 715-735; it reads LVGLAHFTIGNILTFGAFVIA.

The protein belongs to the PsaA/PsaB family. As to quaternary structure, the PsaA/B heterodimer binds the P700 divinyl chlorophyll special pair and subsequent electron acceptors. PSI consists of a core antenna complex that captures photons, and an electron transfer chain that converts photonic excitation into a charge separation. The cyanobacterial PSI reaction center is composed of one copy each of PsaA,B,C,D,E,F,I,J,K,L,M and X, and forms trimeric complexes. PSI electron transfer chain: 5 divinyl chlorophyll a, 1 divinyl chlorophyll a', 2 phylloquinones and 3 4Fe-4S clusters. PSI core antenna: 90 divinyl chlorophyll a, 22 carotenoids, 3 phospholipids and 1 galactolipid. P700 is a divinyl chlorophyll a/divinyl chlorophyll a' dimer, A0 is one or more divinyl chlorophyll a, A1 is one or both phylloquinones and FX is a shared 4Fe-4S iron-sulfur center. serves as cofactor.

The protein resides in the cellular thylakoid membrane. The enzyme catalyses reduced [plastocyanin] + hnu + oxidized [2Fe-2S]-[ferredoxin] = oxidized [plastocyanin] + reduced [2Fe-2S]-[ferredoxin]. Its function is as follows. PsaA and PsaB bind P700, the primary electron donor of photosystem I (PSI), as well as the electron acceptors A0, A1 and FX. PSI is a plastocyanin/cytochrome c6-ferredoxin oxidoreductase, converting photonic excitation into a charge separation, which transfers an electron from the donor P700 chlorophyll pair to the spectroscopically characterized acceptors A0, A1, FX, FA and FB in turn. Oxidized P700 is reduced on the lumenal side of the thylakoid membrane by plastocyanin or cytochrome c6. This Prochlorococcus marinus (strain MIT 9515) protein is Photosystem I P700 chlorophyll a apoprotein A2.